We begin with the raw amino-acid sequence, 438 residues long: 3-phosphoshikimate 1-carboxyvinyltransferase (438 aa).

Positions 26, 27, and 31 each coordinate 3-phosphoshikimate. Lysine 26 contributes to the phosphoenolpyruvate binding site. Glycine 99 and arginine 127 together coordinate phosphoenolpyruvate. 6 residues coordinate 3-phosphoshikimate: serine 170, serine 171, glutamine 172, serine 199, glutamate 314, and histidine 343. Glutamine 172 provides a ligand contact to phosphoenolpyruvate. Glutamate 314 functions as the Proton acceptor in the catalytic mechanism. Positions 347, 388, and 413 each coordinate phosphoenolpyruvate.

Belongs to the EPSP synthase family. As to quaternary structure, monomer.

It is found in the cytoplasm. It carries out the reaction 3-phosphoshikimate + phosphoenolpyruvate = 5-O-(1-carboxyvinyl)-3-phosphoshikimate + phosphate. The protein operates within metabolic intermediate biosynthesis; chorismate biosynthesis; chorismate from D-erythrose 4-phosphate and phosphoenolpyruvate: step 6/7. Catalyzes the transfer of the enolpyruvyl moiety of phosphoenolpyruvate (PEP) to the 5-hydroxyl of shikimate-3-phosphate (S3P) to produce enolpyruvyl shikimate-3-phosphate and inorganic phosphate. This Mycobacterium sp. (strain JLS) protein is 3-phosphoshikimate 1-carboxyvinyltransferase.